The sequence spans 169 residues: Shikimate kinase (169 aa).

13–18 is a binding site for ATP; sequence GAGKST. Mg(2+) is bound at residue S17. Positions 35, 59, and 80 each coordinate substrate. Position 117 (R117) interacts with ATP. Substrate is bound at residue R136. R153 provides a ligand contact to ATP.

Belongs to the shikimate kinase family. Monomer. Requires Mg(2+) as cofactor.

The protein localises to the cytoplasm. The enzyme catalyses shikimate + ATP = 3-phosphoshikimate + ADP + H(+). The protein operates within metabolic intermediate biosynthesis; chorismate biosynthesis; chorismate from D-erythrose 4-phosphate and phosphoenolpyruvate: step 5/7. Its function is as follows. Catalyzes the specific phosphorylation of the 3-hydroxyl group of shikimic acid using ATP as a cosubstrate. This chain is Shikimate kinase, found in Corynebacterium efficiens (strain DSM 44549 / YS-314 / AJ 12310 / JCM 11189 / NBRC 100395).